Reading from the N-terminus, the 258-residue chain is Acetylglutamate kinase (258 aa).

Substrate is bound by residues 44–45, Arg66, and Asn158; that span reads GG. ATP is bound by residues 181–186 and 209–211; these read DVSGIL and IIT.

It belongs to the acetylglutamate kinase family. ArgB subfamily. As to quaternary structure, homodimer.

It localises to the cytoplasm. It catalyses the reaction N-acetyl-L-glutamate + ATP = N-acetyl-L-glutamyl 5-phosphate + ADP. Its pathway is amino-acid biosynthesis; L-arginine biosynthesis; N(2)-acetyl-L-ornithine from L-glutamate: step 2/4. Functionally, catalyzes the ATP-dependent phosphorylation of N-acetyl-L-glutamate. The sequence is that of Acetylglutamate kinase from Shigella flexneri.